The following is a 31-amino-acid chain: Potassium channel toxin alpha-KTx 5.4 (31 aa).

3 disulfide bridges follow: Cys-3-Cys-21, Cys-8-Cys-26, and Cys-12-Cys-28. The interval 6–9 is [R/K]XCQ motif; that stretch reads RRCE. Tyr-31 bears the Tyrosine amide mark.

The protein belongs to the short scorpion toxin superfamily. Potassium channel inhibitor family. Alpha-KTx 05 subfamily. Expressed by the venom gland.

The protein resides in the secreted. In terms of biological role, blocks small conductance calcium-activated potassium channels. Shows activity on KCa2.2/KCNN2 (IC(50)=0.0243 nM), KCa2.3/KCNN3 (IC(50)=1.7 nM), and KCa2.1/KCNN1 (IC(50)=42 nM). Induces cell death when tested on human T lymphoblastic leukemia Jurkat E6.1 and human breast cancer MDA-MB-231 cell lines which constituvely express KCa2.2/KCNN2, but not on human peripheral blood lymphocytes (which do not express KCa2.2/KCNN2). In Hottentotta tamulus (Eastern Indian scorpion), this protein is Potassium channel toxin alpha-KTx 5.4.